The sequence spans 506 residues: ATP synthase subunit alpha, chloroplastic (506 aa).

Residue 170 to 177 (GDRQTGKT) coordinates ATP.

This sequence belongs to the ATPase alpha/beta chains family. F-type ATPases have 2 components, CF(1) - the catalytic core - and CF(0) - the membrane proton channel. CF(1) has five subunits: alpha(3), beta(3), gamma(1), delta(1), epsilon(1). CF(0) has four main subunits: a, b, b' and c.

The protein resides in the plastid. It localises to the chloroplast thylakoid membrane. The catalysed reaction is ATP + H2O + 4 H(+)(in) = ADP + phosphate + 5 H(+)(out). Functionally, produces ATP from ADP in the presence of a proton gradient across the membrane. The alpha chain is a regulatory subunit. In Euglena gracilis, this protein is ATP synthase subunit alpha, chloroplastic.